We begin with the raw amino-acid sequence, 76 residues long: Protein A9 homolog (76 aa).

A signal peptide spans 1–21 (MSCYSSILNSISTLAFLQVAS). The Intravirion portion of the chain corresponds to 23 to 45 (VIELVRHCIMHFCETRIRCNTLA). Residues 46–66 (FVILKILITMVIYFMIGLGLF) form a helical membrane-spanning segment. The Virion surface portion of the chain corresponds to 67–76 (YLAKNGTEAE). Asn71 is a glycosylation site (N-linked (GlcNAc...) asparagine; by host).

Belongs to the chordopoxvirinae A9 family.

It is found in the virion membrane. Its subcellular location is the host cytoplasm. Envelope protein. Required for an early step in virion morphogenesis. The chain is Protein A9 homolog from Fowlpox virus (strain NVSL) (FPV).